The primary structure comprises 406 residues: Serine hydroxymethyltransferase (406 aa).

(6S)-5,6,7,8-tetrahydrofolate-binding positions include L111 and 115-117; that span reads GHL. K220 is modified (N6-(pyridoxal phosphate)lysine). (6S)-5,6,7,8-tetrahydrofolate is bound at residue 340 to 342; it reads SAF.

It belongs to the SHMT family. Homodimer. Pyridoxal 5'-phosphate is required as a cofactor.

The protein resides in the cytoplasm. The catalysed reaction is (6R)-5,10-methylene-5,6,7,8-tetrahydrofolate + glycine + H2O = (6S)-5,6,7,8-tetrahydrofolate + L-serine. The protein operates within one-carbon metabolism; tetrahydrofolate interconversion. It participates in amino-acid biosynthesis; glycine biosynthesis; glycine from L-serine: step 1/1. Functionally, catalyzes the reversible interconversion of serine and glycine with tetrahydrofolate (THF) serving as the one-carbon carrier. This reaction serves as the major source of one-carbon groups required for the biosynthesis of purines, thymidylate, methionine, and other important biomolecules. Also exhibits THF-independent aldolase activity toward beta-hydroxyamino acids, producing glycine and aldehydes, via a retro-aldol mechanism. The protein is Serine hydroxymethyltransferase of Mycoplasma genitalium (strain ATCC 33530 / DSM 19775 / NCTC 10195 / G37) (Mycoplasmoides genitalium).